The following is a 53-amino-acid chain: Conotoxin Cal9.2f (53 aa).

Positions 1-6 (KKGVTL) are excised as a propeptide. 3 disulfide bridges follow: Cys-15–Cys-32, Cys-20–Cys-42, and Cys-22–Cys-47.

Expressed by the venom duct.

Its subcellular location is the secreted. In terms of biological role, probable neurotoxin with unknown target. Possibly targets ion channels. The chain is Conotoxin Cal9.2f from Californiconus californicus (California cone).